The sequence spans 482 residues: tRNA sulfurtransferase (482 aa).

One can recognise a THUMP domain in the interval 61–165; sequence DVTLAVLTQT…NDKLNLIIAR (105 aa). ATP is bound by residues 183-184, Lys-265, Gly-287, and Gln-296; that span reads LI. Cys-344 and Cys-456 are joined by a disulfide. The 79-residue stretch at 404 to 482 folds into the Rhodanese domain; sequence LGSDVVVLDI…GYKNVKVYRP (79 aa). Cys-456 serves as the catalytic Cysteine persulfide intermediate.

This sequence belongs to the ThiI family.

The protein resides in the cytoplasm. The catalysed reaction is [ThiI sulfur-carrier protein]-S-sulfanyl-L-cysteine + a uridine in tRNA + 2 reduced [2Fe-2S]-[ferredoxin] + ATP + H(+) = [ThiI sulfur-carrier protein]-L-cysteine + a 4-thiouridine in tRNA + 2 oxidized [2Fe-2S]-[ferredoxin] + AMP + diphosphate. It catalyses the reaction [ThiS sulfur-carrier protein]-C-terminal Gly-Gly-AMP + S-sulfanyl-L-cysteinyl-[cysteine desulfurase] + AH2 = [ThiS sulfur-carrier protein]-C-terminal-Gly-aminoethanethioate + L-cysteinyl-[cysteine desulfurase] + A + AMP + 2 H(+). It functions in the pathway cofactor biosynthesis; thiamine diphosphate biosynthesis. Its function is as follows. Catalyzes the ATP-dependent transfer of a sulfur to tRNA to produce 4-thiouridine in position 8 of tRNAs, which functions as a near-UV photosensor. Also catalyzes the transfer of sulfur to the sulfur carrier protein ThiS, forming ThiS-thiocarboxylate. This is a step in the synthesis of thiazole, in the thiamine biosynthesis pathway. The sulfur is donated as persulfide by IscS. This is tRNA sulfurtransferase from Aliivibrio fischeri (strain ATCC 700601 / ES114) (Vibrio fischeri).